Reading from the N-terminus, the 601-residue chain is Probable N-acetylgalactosaminyltransferase 7 (601 aa).

Over 1 to 20 (MIIARKKLQLQRLWRQRGCR) the chain is Cytoplasmic. A helical; Signal-anchor for type II membrane protein membrane pass occupies residues 21-38 (VATYICLGVLVLFGFVYN). Residues 39–601 (SKGNSMSSIK…FVWKEFYQSS (563 aa)) lie on the Lumenal side of the membrane. Residues 61–108 (DLTNKELPGGPDPNTIFRGSELGNYEPKEPEIPSNQPGEHGKPVPVTD) are disordered. N-linked (GlcNAc...) asparagine glycosylation occurs at asparagine 135. 5 disulfide bridges follow: cysteine 146–cysteine 382, cysteine 373–cysteine 452, cysteine 490–cysteine 506, cysteine 529–cysteine 542, and cysteine 568–cysteine 583. Positions 155–265 (LPTVSVVVVF…TNWLPPLLAP (111 aa)) are catalytic subdomain A. The substrate site is built by aspartate 196 and arginine 226. Positions 249 and 251 each coordinate Mn(2+). The interval 328 to 390 (PFRSPTHAGG…PCSHVGHVYR (63 aa)) is catalytic subdomain B. Tryptophan 359 is a binding site for substrate. Residue histidine 387 participates in Mn(2+) binding. Arginine 390 and tyrosine 395 together coordinate substrate. The Ricin B-type lectin domain maps to 477–595 (DVWGEARNPA…DNERQKFVWK (119 aa)).

The protein belongs to the glycosyltransferase 2 family. GalNAc-T subfamily. It depends on Mn(2+) as a cofactor.

It localises to the golgi apparatus membrane. It functions in the pathway protein modification; protein glycosylation. Functionally, probable glycopeptide transferase involved in O-linked oligosaccharide biosynthesis. Glycopeptide transferases catalyze the transfer of an N-acetyl-D-galactosamine residue to an already glycosylated peptide. In contrast to other members of the family, it does not act as a peptide transferase that transfers GalNAc onto serine or threonine residue on peptides that have been tested. Some peptide transferase activity is however not excluded, considering that its appropriate peptide substrate may remain unidentified. This chain is Probable N-acetylgalactosaminyltransferase 7 (gly-7), found in Caenorhabditis elegans.